A 514-amino-acid chain; its full sequence is MVEEVQKHSVHTLVFRSLKRTHDMFVADNGKPVPLDEESHKRKMAIKLRNEYGPVLHMPTSKENLKEKGPQNATDSYVHKQYPANQGQEVEYFVAGTHPYPPGPGVALTADTKIQRMPSESAAQSLAVALPLQTKADANRTAPSGSEYRHPGASDRPQPTAMNSIVMETGNTKNSALMAKKAPTMPKPQWHPPWKLYRVISGHLGWVRCIAVEPGNQWFVTGSADRTIKIWDLASGKLKLSLTGHISTVRGVIVSTRSPYLFSCGEDKQVKCWDLEYNKVIRHYHGHLSAVYGLDLHPTIDVLVTCSRDSTARIWDVRTKASVHTLSGHTNAVATVRCQAAEPQIITGSHDTTIRLWDLVAGKTRVTLTNHKKSVRAVVLHPRHYTFASGSPDNIKQWKFPDGSFIQNLSGHNAIINTLTVNSDGVLVSGADNGTMHLWDWRTGYNFQRVHAAVQPGSLDSESGIFACAFDQSESRLLTAEADKTIKVYREDDTATEETHPVSWKPEIIKRKRF.

M1 bears the N-acetylmethionine mark. S119 bears the Phosphoserine mark. A disordered region spans residues 135–160 (KADANRTAPSGSEYRHPGASDRPQPT). A Phosphoserine modification is found at S201. WD repeat units follow at residues 202–241 (GHLGWVRCIAVEPGNQWFVTGSADRTIKIWDLASGKLKLS), 244–283 (GHISTVRGVIVSTRSPYLFSCGEDKQVKCWDLEYNKVIRH), 286–325 (GHLSAVYGLDLHPTIDVLVTCSRDSTARIWDVRTKASVHT), 328–367 (GHTNAVATVRCQAAEPQIITGSHDTTIRLWDLVAGKTRVT), 370–410 (NHKK…QNLS), 411–449 (GHNAIINTLTVNSDGVLVSGADNGTMHLWDWRTGYNFQR), and 460–499 (DSESGIFACAFDQSESRLLTAEADKTIKVYREDDTATEET). At S391 the chain carries Phosphoserine.

It belongs to the WD repeat PRL1/PRL2 family. In terms of assembly, identified in the spliceosome C complex. Component of the PRP19-CDC5L splicing complex composed of a core complex comprising a homotetramer of PRPF19, CDC5L, PLRG1 and BCAS2, and at least three less stably associated proteins CTNNBL1, CWC15 and HSPA8. Interacts (via its WD40 repeat domain) directly with CDC5L (via its C-terminal); the interaction is required for mRNA splicing but not for spliceosome assembly. Component of the minor spliceosome, which splices U12-type introns. Within this complex, interacts with CRIPT. Also interacts directly in the complex with BCAS2 and PRPF19. Interacts with USB1.

It localises to the nucleus. The protein localises to the nucleus speckle. Functionally, involved in pre-mRNA splicing as component of the spliceosome. Component of the PRP19-CDC5L complex that forms an integral part of the spliceosome and is required for activating pre-mRNA splicing. As a component of the minor spliceosome, involved in the splicing of U12-type introns in pre-mRNAs. In Homo sapiens (Human), this protein is Pleiotropic regulator 1 (PLRG1).